The primary structure comprises 125 residues: Snaclec VP12 subunit B (125 aa).

Intrachain disulfides connect cysteine 4-cysteine 15, cysteine 32-cysteine 121, and cysteine 98-cysteine 113. One can recognise a C-type lectin domain in the interval 11–122 (FEKYCYKVFQ…CNDPRYFVCK (112 aa)).

The protein belongs to the snaclec family. As to quaternary structure, heterodimer of subunits alpha and beta; disulfide-linked. Expressed by the venom gland.

It localises to the secreted. Functionally, inhibits integrin alpha-2/beta-1- (ITGA2/ITGB1) dependent melanoma metastasis. The polypeptide is Snaclec VP12 subunit B (Daboia palaestinae (Palestine viper)).